A 156-amino-acid polypeptide reads, in one-letter code: Small ribosomal subunit protein uS7 (156 aa).

The protein belongs to the universal ribosomal protein uS7 family. In terms of assembly, part of the 30S ribosomal subunit. Contacts proteins S9 and S11.

One of the primary rRNA binding proteins, it binds directly to 16S rRNA where it nucleates assembly of the head domain of the 30S subunit. Is located at the subunit interface close to the decoding center, probably blocks exit of the E-site tRNA. The polypeptide is Small ribosomal subunit protein uS7 (Acinetobacter baumannii (strain AB307-0294)).